Consider the following 579-residue polypeptide: Laccase-24 (579 aa).

The first 23 residues, methionine 1–alanine 23, serve as a signal peptide directing secretion. 2 Plastocyanin-like domains span residues asparagine 31–glycine 148 and glutamate 159–glycine 322. N-linked (GlcNAc...) asparagine glycosylation is found at asparagine 34 and asparagine 78. Positions 82 and 84 each coordinate Cu cation. N-linked (GlcNAc...) asparagine glycans are attached at residues asparagine 110 and asparagine 116. The Cu cation site is built by histidine 127 and histidine 129. Asparagine 204, asparagine 209, asparagine 219, asparagine 241, asparagine 312, asparagine 337, asparagine 348, asparagine 398, asparagine 405, asparagine 444, and asparagine 462 each carry an N-linked (GlcNAc...) asparagine glycan. One can recognise a Plastocyanin-like 3 domain in the interval aspartate 425 to proline 563. Positions 480, 483, and 485 each coordinate Cu cation. Asparagine 500 is a glycosylation site (N-linked (GlcNAc...) asparagine). Cu cation contacts are provided by histidine 542, cysteine 543, histidine 544, and histidine 548.

This sequence belongs to the multicopper oxidase family. Requires Cu cation as cofactor.

Its subcellular location is the secreted. It is found in the extracellular space. It localises to the apoplast. It catalyses the reaction 4 hydroquinone + O2 = 4 benzosemiquinone + 2 H2O. In terms of biological role, lignin degradation and detoxification of lignin-derived products. The polypeptide is Laccase-24 (LAC24) (Oryza sativa subsp. japonica (Rice)).